Here is a 696-residue protein sequence, read N- to C-terminus: DNA-directed RNA polymerase subunit beta' (696 aa).

Zn(2+) contacts are provided by C69, C71, C87, and C90. Mg(2+)-binding residues include D504, D506, and D508.

It belongs to the RNA polymerase beta' chain family. RpoC1 subfamily. In terms of assembly, in plastids the minimal PEP RNA polymerase catalytic core is composed of four subunits: alpha, beta, beta', and beta''. When a (nuclear-encoded) sigma factor is associated with the core the holoenzyme is formed, which can initiate transcription. Mg(2+) is required as a cofactor. It depends on Zn(2+) as a cofactor.

It localises to the plastid. The protein resides in the chloroplast. It catalyses the reaction RNA(n) + a ribonucleoside 5'-triphosphate = RNA(n+1) + diphosphate. Functionally, DNA-dependent RNA polymerase catalyzes the transcription of DNA into RNA using the four ribonucleoside triphosphates as substrates. In Pinus thunbergii (Japanese black pine), this protein is DNA-directed RNA polymerase subunit beta'.